The sequence spans 124 residues: Hemoglobin subunit alpha (124 aa).

A Globin domain is found at 1–124 (PLSAADKTII…VAKALSSHYR (124 aa)). Residue His57 coordinates O2. A heme b-binding site is contributed by His79.

The protein belongs to the globin family. In terms of assembly, hb 1 is a heterotetramer of two alpha and two beta-1 chains. Hb 2 is a heterotetramer of two alpha and two beta-2 chains. Hb 3 is a heterotetramer of two alpha and two beta-3 chains. In terms of tissue distribution, red blood cells (at protein level).

Functionally, involved in oxygen transport from gills to the various peripheral tissues. In Somniosus microcephalus (Greenland sleeper shark), this protein is Hemoglobin subunit alpha.